The chain runs to 266 residues: UPF0354 protein lwe1624 (266 aa).

This sequence belongs to the UPF0354 family.

This is UPF0354 protein lwe1624 from Listeria welshimeri serovar 6b (strain ATCC 35897 / DSM 20650 / CCUG 15529 / CIP 8149 / NCTC 11857 / SLCC 5334 / V8).